Here is a 287-residue protein sequence, read N- to C-terminus: Vesicle-associated protein 4-3 (287 aa).

Positions 1–14 (MALTEDKSDSDGRR) are enriched in basic and acidic residues. Residues 1–45 (MALTEDKSDSDGRRWGKFKLPFRNSNSQAPSASSSSSMATSSSSV) are disordered. Positions 25–45 (SNSQAPSASSSSSMATSSSSV) are enriched in low complexity. Residues 99 to 221 (RLKLDPSAKL…EEQVMRVVFL (123 aa)) form the MSP domain.

Belongs to the VAMP-associated protein (VAP) (TC 9.B.17) family.

Functionally, may play a role in vesicle trafficking. The protein is Vesicle-associated protein 4-3 (PVA43) of Arabidopsis thaliana (Mouse-ear cress).